Reading from the N-terminus, the 239-residue chain is DNA repair protein RecO (239 aa).

The protein belongs to the RecO family.

Involved in DNA repair and RecF pathway recombination. This chain is DNA repair protein RecO, found in Bifidobacterium longum subsp. infantis (strain ATCC 15697 / DSM 20088 / JCM 1222 / NCTC 11817 / S12).